A 110-amino-acid chain; its full sequence is Endoribonuclease SymE (110 aa).

Residues 29–74 (SSYPEYTRIPAITLKGQWLEDAGFTTGTQVDVRVMNGCIVLTAQQP) enclose the SpoVT-AbrB domain.

It belongs to the SymE family.

The protein localises to the cytoplasm. Involved in the degradation and recycling of damaged RNA. It is itself a target for degradation by the ATP-dependent protease Lon. The protein is Endoribonuclease SymE of Salmonella choleraesuis (strain SC-B67).